The following is a 224-amino-acid chain: MANSGLQLLGYFLALGGWVGIIASTALPQWKQSSYAGDAIITAVGLYEGLWMSCASQSTGQVQCKLYDSLLALDGHIQSARALMVVAVLLGFVAMVLSVVGMKCTRVGDSNPTAKSRVAISGGALFLLAGLCTLTAVSWYATLVTQEFFNPSTPVNARYEFGPALFVGWASAGLAMLGGSFLCCTCPEPERANSIPQPYRSGPSTAAREPVVKLPASVKGPLGV.

Over 1–7 the chain is Cytoplasmic; sequence MANSGLQ. Residues 8-28 form a helical membrane-spanning segment; the sequence is LLGYFLALGGWVGIIASTALP. Topologically, residues 29 to 81 are extracellular; sequence QWKQSSYAGDAIITAVGLYEGLWMSCASQSTGQVQCKLYDSLLALDGHIQSAR. An intrachain disulfide couples Cys54 to Cys64. The chain crosses the membrane as a helical span at residues 82 to 102; it reads ALMVVAVLLGFVAMVLSVVGM. Residues 103–117 are Cytoplasmic-facing; the sequence is KCTRVGDSNPTAKSR. Residues 118–138 form a helical membrane-spanning segment; that stretch reads VAISGGALFLLAGLCTLTAVS. Residues 139 to 160 lie on the Extracellular side of the membrane; it reads WYATLVTQEFFNPSTPVNARYE. The helical transmembrane segment at 161 to 181 threads the bilayer; the sequence is FGPALFVGWASAGLAMLGGSF. Over 182–224 the chain is Cytoplasmic; the sequence is LCCTCPEPERANSIPQPYRSGPSTAAREPVVKLPASVKGPLGV.

It belongs to the claudin family. Can form homo- and heteropolymeric tight junction strands. Interacts with other claudins including CLDN3, CLDN10, CLDN16 and CLDN18 with highest affinity for CLDN16. Interacts (via PDZ-binding motif TRV) with TJP1 (via PDZ domain). In terms of assembly, (Microbial infection) Interacts (via both extracellular domains) with Clostridium perfringens enterotoxin CPE; the interaction disrupts claudin assembly in tight junctions. In terms of tissue distribution, expressed in the corticomedullary axis of the TAL, specifically in the cortex and the outer stripe of outer medulla (OSOM) zone (at protein level). Expressed in peripheral nervous system, in Schwan cells (at protein level).

It is found in the cell junction. The protein localises to the tight junction. It localises to the cell membrane. It carries out the reaction Mg(2+)(in) = Mg(2+)(out). The catalysed reaction is Ca(2+)(in) = Ca(2+)(out). It catalyses the reaction Na(+)(in) = Na(+)(out). The enzyme catalyses K(+)(in) = K(+)(out). It carries out the reaction Rb(+)(in) = Rb(+)(out). The catalysed reaction is Cs(+)(in) = Cs(+)(out). It catalyses the reaction Li(+)(in) = Li(+)(out). In terms of biological role, forms paracellular channels: coassembles with CLDN16 into tight junction strands with cation-selective channels through the strands, conveying epithelial permeability in a process known as paracellular tight junction permeability. Involved in the maintenance of ion gradients along the nephron. In the thick ascending limb (TAL) of Henle's loop, facilitates sodium paracellular permeability from the interstitial compartment to the lumen, contributing to the lumen-positive transepithelial potential that drives paracellular magnesium and calcium reabsorption. Forms paracellular barriers on its own. In the peripheral nervous system, represents a major constituent of the tight junctions in Schwann cells and contributes to electrical sealing. During retinal neurogenesis, may regulate the barrier properties of tight junctions in retinal pigment epithelium, required for proper retinal tissue differentiation and vision. This is Claudin-19 from Mus musculus (Mouse).